Reading from the N-terminus, the 391-residue chain is Probable chaperonin-like protein PrmG (391 aa).

The tract at residues T153–A191 is disordered. The segment covering T154 to S174 has biased composition (polar residues).

It belongs to the chaperonin (HSP60) family.

In terms of biological role, probably plays an essential role in the productive folding of PrmA and PrmC, and thus in the formation of the active PrmABCD complex. This Gordonia sp. (strain TY-5) protein is Probable chaperonin-like protein PrmG.